Here is a 335-residue protein sequence, read N- to C-terminus: Anthranilate phosphoribosyltransferase (335 aa).

5-phospho-alpha-D-ribose 1-diphosphate is bound by residues glycine 79, glycine 82–aspartate 83, threonine 87, asparagine 89–threonine 92, lysine 107–serine 115, and serine 119. Position 79 (glycine 79) interacts with anthranilate. Residue serine 91 coordinates Mg(2+). Arginine 165 contributes to the anthranilate binding site. Positions 223 and 224 each coordinate Mg(2+).

It belongs to the anthranilate phosphoribosyltransferase family. Homodimer. Mg(2+) serves as cofactor.

It catalyses the reaction N-(5-phospho-beta-D-ribosyl)anthranilate + diphosphate = 5-phospho-alpha-D-ribose 1-diphosphate + anthranilate. The protein operates within amino-acid biosynthesis; L-tryptophan biosynthesis; L-tryptophan from chorismate: step 2/5. In terms of biological role, catalyzes the transfer of the phosphoribosyl group of 5-phosphorylribose-1-pyrophosphate (PRPP) to anthranilate to yield N-(5'-phosphoribosyl)-anthranilate (PRA). This chain is Anthranilate phosphoribosyltransferase, found in Helicobacter pylori (strain Shi470).